The following is a 122-amino-acid chain: Ribonuclease P protein component (122 aa).

The protein belongs to the RnpA family. Consists of a catalytic RNA component (M1 or rnpB) and a protein subunit.

The enzyme catalyses Endonucleolytic cleavage of RNA, removing 5'-extranucleotides from tRNA precursor.. RNaseP catalyzes the removal of the 5'-leader sequence from pre-tRNA to produce the mature 5'-terminus. It can also cleave other RNA substrates such as 4.5S RNA. The protein component plays an auxiliary but essential role in vivo by binding to the 5'-leader sequence and broadening the substrate specificity of the ribozyme. The protein is Ribonuclease P protein component of Halorhodospira halophila (strain DSM 244 / SL1) (Ectothiorhodospira halophila (strain DSM 244 / SL1)).